Reading from the N-terminus, the 493-residue chain is Cobyric acid synthase (493 aa).

The GATase cobBQ-type domain occupies 252 to 443; the sequence is DLQITVVRLP…LHGLFDNGPW (192 aa). Residue Cys-333 is the Nucleophile of the active site. His-435 is an active-site residue.

This sequence belongs to the CobB/CobQ family. CobQ subfamily.

The protein operates within cofactor biosynthesis; adenosylcobalamin biosynthesis. Functionally, catalyzes amidations at positions B, D, E, and G on adenosylcobyrinic A,C-diamide. NH(2) groups are provided by glutamine, and one molecule of ATP is hydrogenolyzed for each amidation. The sequence is that of Cobyric acid synthase from Nostoc sp. (strain PCC 7120 / SAG 25.82 / UTEX 2576).